Reading from the N-terminus, the 348-residue chain is Histidinol-phosphate aminotransferase (348 aa).

Lys210 is modified (N6-(pyridoxal phosphate)lysine).

This sequence belongs to the class-II pyridoxal-phosphate-dependent aminotransferase family. Histidinol-phosphate aminotransferase subfamily. In terms of assembly, homodimer. Pyridoxal 5'-phosphate is required as a cofactor.

It catalyses the reaction L-histidinol phosphate + 2-oxoglutarate = 3-(imidazol-4-yl)-2-oxopropyl phosphate + L-glutamate. The protein operates within amino-acid biosynthesis; L-histidine biosynthesis; L-histidine from 5-phospho-alpha-D-ribose 1-diphosphate: step 7/9. The protein is Histidinol-phosphate aminotransferase of Cytophaga hutchinsonii (strain ATCC 33406 / DSM 1761 / CIP 103989 / NBRC 15051 / NCIMB 9469 / D465).